The sequence spans 347 residues: Phenylalanine--tRNA ligase alpha subunit (347 aa).

Glu268 is a Mg(2+) binding site.

It belongs to the class-II aminoacyl-tRNA synthetase family. Phe-tRNA synthetase alpha subunit type 1 subfamily. Tetramer of two alpha and two beta subunits. Mg(2+) serves as cofactor.

Its subcellular location is the cytoplasm. The enzyme catalyses tRNA(Phe) + L-phenylalanine + ATP = L-phenylalanyl-tRNA(Phe) + AMP + diphosphate + H(+). In Leptothrix cholodnii (strain ATCC 51168 / LMG 8142 / SP-6) (Leptothrix discophora (strain SP-6)), this protein is Phenylalanine--tRNA ligase alpha subunit.